A 347-amino-acid polypeptide reads, in one-letter code: 4-hydroxy-2-oxovalerate aldolase (347 aa).

A Pyruvate carboxyltransferase domain is found at 2–252 (ILISDATLRD…DTRTTFEHVM (251 aa)). Residue 10-11 (RD) participates in substrate binding. Aspartate 11 serves as a coordination point for Mn(2+). Histidine 14 serves as the catalytic Proton acceptor. Residues serine 164 and histidine 191 each contribute to the substrate site. Histidine 191 and histidine 193 together coordinate Mn(2+).

This sequence belongs to the 4-hydroxy-2-oxovalerate aldolase family.

The enzyme catalyses (S)-4-hydroxy-2-oxopentanoate = acetaldehyde + pyruvate. The protein is 4-hydroxy-2-oxovalerate aldolase (mhpE) of Burkholderia thailandensis (strain ATCC 700388 / DSM 13276 / CCUG 48851 / CIP 106301 / E264).